Consider the following 188-residue polypeptide: Putative manganese efflux pump MntP (188 aa).

6 consecutive transmembrane segments (helical) span residues 3–23 (LSAT…ASIG), 41–61 (LIFG…GMLA), 62–82 (SQFV…FLGG), 107–129 (LLVT…LAFL), 143–163 (ATFL…PLLG), and 168–188 (ILGG…HFAG).

Belongs to the MntP (TC 9.B.29) family.

Its subcellular location is the cell inner membrane. Probably functions as a manganese efflux pump. The sequence is that of Putative manganese efflux pump MntP from Klebsiella pneumoniae (strain 342).